The sequence spans 134 residues: Profilin-3 (134 aa).

A disulfide bridge connects residues cysteine 13 and cysteine 118. The short motif at 84 to 100 (AVIRGKKGSGGITIKKT) is the Involved in PIP2 interaction element. A Phosphothreonine modification is found at threonine 114.

Belongs to the profilin family. Occurs in many kinds of cells as a complex with monomeric actin in a 1:1 ratio. Post-translationally, phosphorylated by MAP kinases.

Its subcellular location is the cytoplasm. It is found in the cytoskeleton. Its function is as follows. Binds to actin and affects the structure of the cytoskeleton. At high concentrations, profilin prevents the polymerization of actin, whereas it enhances it at low concentrations. By binding to PIP2, it inhibits the formation of IP3 and DG. This chain is Profilin-3 (PRO3), found in Olea europaea (Common olive).